The following is a 784-amino-acid chain: Kinesin-like protein 6 (784 aa).

Residues 6–389 (SISVAVRVRP…LKYGNRAKNI (384 aa)) form the Kinesin motor domain. 134 to 141 (GATGCGKT) serves as a coordination point for ATP. Coiled-coil stretches lie at residues 405–440 (SEYV…EVRK) and 463–483 (RDLQ…EDEI). Positions 677–715 (SEVPTTSSVPPVEIKNKDSKPKVEKSLDKHNMNNDRSFL) are disordered. Basic and acidic residues predominate over residues 690–709 (IKNKDSKPKVEKSLDKHNMN).

Belongs to the TRAFAC class myosin-kinesin ATPase superfamily. Kinesin family. Kinesin II subfamily. As to quaternary structure, heterodimer with klp5.

It localises to the cytoplasm. It is found in the cytoskeleton. Its subcellular location is the chromosome. The protein resides in the centromere. The protein localises to the kinetochore. It localises to the spindle. Has a role in establishing metaphase during mitosis. Required for chromosome segregation where it generates tension during kinetochore capturing. The polypeptide is Kinesin-like protein 6 (klp6) (Schizosaccharomyces pombe (strain 972 / ATCC 24843) (Fission yeast)).